Reading from the N-terminus, the 162-residue chain is uncharacterized protein (162 aa).

This is an uncharacterized protein from Rhodobacter capsulatus (Rhodopseudomonas capsulata).